We begin with the raw amino-acid sequence, 248 residues long: MTYNLNCDISNSFYRLAEVEVGKHLYWEIAGFKLHGQVFIVSWLVMLALIIFALNGTRKLNQIPSGIQNFMEYVYEFLQDIAKNQIGEEDYRPWVPYISTVFLFIFGANWAGALIPWKLIQLPEGELAAPTNDINVTVALALLTSISYFYAGISKKGISYFSRYVQPTPILLPINILEDFTKPLSLSFRLFGNVLADELVVSVFALLVPILIPLPVMTLGLFASSVQALIFSTLSAAYIGEALEDHGH.

The next 4 helical transmembrane spans lie at 34-54, 95-115, 134-154, and 203-223; these read LHGQ…IFAL, VPYI…GALI, INVT…AGIS, and VFAL…GLFA.

It belongs to the ATPase A chain family. F-type ATPases have 2 components, CF(1) - the catalytic core - and CF(0) - the membrane proton channel. CF(1) has five subunits: alpha(3), beta(3), gamma(1), delta(1), epsilon(1). CF(0) has four main subunits: a, b, b' and c.

Its subcellular location is the plastid. It is found in the chloroplast thylakoid membrane. In terms of biological role, key component of the proton channel; it plays a direct role in the translocation of protons across the membrane. This Guillardia theta (Cryptophyte) protein is ATP synthase subunit a, chloroplastic.